Here is a 39-residue protein sequence, read N- to C-terminus: Photosystem II reaction center protein J (39 aa).

The chain crosses the membrane as a helical span at residues 9–29 (LWIIATFGGIAALTVVGLFIY).

The protein belongs to the PsbJ family. As to quaternary structure, PSII is composed of 1 copy each of membrane proteins PsbA, PsbB, PsbC, PsbD, PsbE, PsbF, PsbH, PsbI, PsbJ, PsbK, PsbL, PsbM, PsbT, PsbX, PsbY, PsbZ, Psb30/Ycf12, at least 3 peripheral proteins of the oxygen-evolving complex and a large number of cofactors. It forms dimeric complexes.

The protein localises to the plastid. It is found in the chloroplast thylakoid membrane. One of the components of the core complex of photosystem II (PSII). PSII is a light-driven water:plastoquinone oxidoreductase that uses light energy to abstract electrons from H(2)O, generating O(2) and a proton gradient subsequently used for ATP formation. It consists of a core antenna complex that captures photons, and an electron transfer chain that converts photonic excitation into a charge separation. In Guillardia theta (Cryptophyte), this protein is Photosystem II reaction center protein J.